The chain runs to 426 residues: Histidine--tRNA ligase (426 aa).

This sequence belongs to the class-II aminoacyl-tRNA synthetase family. Homodimer.

Its subcellular location is the cytoplasm. The enzyme catalyses tRNA(His) + L-histidine + ATP = L-histidyl-tRNA(His) + AMP + diphosphate + H(+). The protein is Histidine--tRNA ligase of Hydrogenovibrio crunogenus (strain DSM 25203 / XCL-2) (Thiomicrospira crunogena).